The primary structure comprises 380 residues: Protein kinase ORF15 (380 aa).

Residues 93 to 371 enclose the Protein kinase domain; the sequence is FIPVKVAGCL…LLIAQLTKFI (279 aa). Residue lysine 118 participates in ATP binding. Catalysis depends on aspartate 217, which acts as the Proton acceptor.

Belongs to the protein kinase superfamily. Ser/Thr protein kinase family.

The enzyme catalyses L-seryl-[protein] + ATP = O-phospho-L-seryl-[protein] + ADP + H(+). The catalysed reaction is L-threonyl-[protein] + ATP = O-phospho-L-threonyl-[protein] + ADP + H(+). In Ictalurid herpesvirus 1 (strain Auburn) (IcHV-1), this protein is Protein kinase ORF15 (ORF15).